A 283-amino-acid polypeptide reads, in one-letter code: tRNA-cytidine(32) 2-sulfurtransferase (283 aa).

A PP-loop motif motif is present at residues 37 to 42 (SGGKDS). [4Fe-4S] cluster contacts are provided by Cys-112, Cys-115, and Cys-203.

The protein belongs to the TtcA family. In terms of assembly, homodimer. Mg(2+) is required as a cofactor. It depends on [4Fe-4S] cluster as a cofactor.

The protein localises to the cytoplasm. The catalysed reaction is cytidine(32) in tRNA + S-sulfanyl-L-cysteinyl-[cysteine desulfurase] + AH2 + ATP = 2-thiocytidine(32) in tRNA + L-cysteinyl-[cysteine desulfurase] + A + AMP + diphosphate + H(+). The protein operates within tRNA modification. Its function is as follows. Catalyzes the ATP-dependent 2-thiolation of cytidine in position 32 of tRNA, to form 2-thiocytidine (s(2)C32). The sulfur atoms are provided by the cysteine/cysteine desulfurase (IscS) system. The polypeptide is tRNA-cytidine(32) 2-sulfurtransferase (Legionella pneumophila (strain Paris)).